The chain runs to 223 residues: DNA mismatch repair protein MutH (223 aa).

This sequence belongs to the MutH family.

The protein localises to the cytoplasm. Sequence-specific endonuclease that cleaves unmethylated GATC sequences. It is involved in DNA mismatch repair. The sequence is that of DNA mismatch repair protein MutH from Shewanella baltica (strain OS195).